Consider the following 315-residue polypeptide: ATP synthase gamma chain (315 aa).

This sequence belongs to the ATPase gamma chain family. In terms of assembly, F-type ATPases have 2 components, CF(1) - the catalytic core - and CF(0) - the membrane proton channel. CF(1) has five subunits: alpha(3), beta(3), gamma(1), delta(1), epsilon(1). CF(0) has three main subunits: a, b and c.

Its subcellular location is the cellular thylakoid membrane. Functionally, produces ATP from ADP in the presence of a proton gradient across the membrane. The gamma chain is believed to be important in regulating ATPase activity and the flow of protons through the CF(0) complex. In Microcystis aeruginosa (strain NIES-843 / IAM M-2473), this protein is ATP synthase gamma chain.